Reading from the N-terminus, the 327-residue chain is Succinylglutamate desuccinylase (327 aa).

Positions 53, 56, and 146 each coordinate Zn(2+). Glu209 is an active-site residue.

It belongs to the AspA/AstE family. Succinylglutamate desuccinylase subfamily. Zn(2+) serves as cofactor.

The enzyme catalyses N-succinyl-L-glutamate + H2O = L-glutamate + succinate. It participates in amino-acid degradation; L-arginine degradation via AST pathway; L-glutamate and succinate from L-arginine: step 5/5. Functionally, transforms N(2)-succinylglutamate into succinate and glutamate. In Serratia proteamaculans (strain 568), this protein is Succinylglutamate desuccinylase.